A 421-amino-acid polypeptide reads, in one-letter code: MSILLKGGLILYDTSYHPTRADILIEGDKIVEVKRNINKAADEVIDASHSLIIPAFINAHTHSPMVIFRGLAEDVPLMDWLQNYIWPAERKLKRKEVYWGAKLALLEMVHSGISTFVDMYFYMEEVARATLEVGLRGFLGYGMVDLEDEEKRRKEIKETEKLHEFITKLNSKLVKFILAPHAPYTCSLDCLKWVAEKSREWDSLVTIHLAETRDEIKIMEEKYGRSPVEVLKEANLLNDKLIAAHGIWLSKKDLEMLASSNVTIAHCPASNMKLGSGIFPMRDAIDEDINVALGTDGAASNNTLDIIREMRLASLLQKVNTLNPAIVKSEEIFRMATINGAKALKLKAGIIKEGYIADIAVINLKRSHLLPLHNPLATLIFSAKAGDIDTLIVSGRVIMLDGEVLTIDEEKVIDKFLGVGI.

Zn(2+) is bound by residues H60 and H62. Positions 89 and 181 each coordinate substrate. H208 provides a ligand contact to Zn(2+). Substrate contacts are provided by E211 and D296. D296 is a binding site for Zn(2+).

Belongs to the metallo-dependent hydrolases superfamily. MTA/SAH deaminase family. Requires Zn(2+) as cofactor.

The enzyme catalyses S-adenosyl-L-homocysteine + H2O + H(+) = S-inosyl-L-homocysteine + NH4(+). It catalyses the reaction S-methyl-5'-thioadenosine + H2O + H(+) = S-methyl-5'-thioinosine + NH4(+). Its function is as follows. Catalyzes the deamination of 5-methylthioadenosine and S-adenosyl-L-homocysteine into 5-methylthioinosine and S-inosyl-L-homocysteine, respectively. Is also able to deaminate adenosine. This chain is 5-methylthioadenosine/S-adenosylhomocysteine deaminase, found in Pyrococcus horikoshii (strain ATCC 700860 / DSM 12428 / JCM 9974 / NBRC 100139 / OT-3).